Consider the following 295-residue polypeptide: Bifunctional protein FolD (295 aa).

Residues 165 to 167 (GRG), Ser-192, and Ile-233 contribute to the NADP(+) site.

The protein belongs to the tetrahydrofolate dehydrogenase/cyclohydrolase family. In terms of assembly, homodimer.

It catalyses the reaction (6R)-5,10-methylene-5,6,7,8-tetrahydrofolate + NADP(+) = (6R)-5,10-methenyltetrahydrofolate + NADPH. It carries out the reaction (6R)-5,10-methenyltetrahydrofolate + H2O = (6R)-10-formyltetrahydrofolate + H(+). It functions in the pathway one-carbon metabolism; tetrahydrofolate interconversion. Functionally, catalyzes the oxidation of 5,10-methylenetetrahydrofolate to 5,10-methenyltetrahydrofolate and then the hydrolysis of 5,10-methenyltetrahydrofolate to 10-formyltetrahydrofolate. In Tropheryma whipplei (strain Twist) (Whipple's bacillus), this protein is Bifunctional protein FolD.